A 202-amino-acid chain; its full sequence is Small ribosomal subunit protein uS4 (202 aa).

The segment at 23-42 (RKAARRSYPPGQHGQARRKR) is disordered. Residues 90 to 154 (MRLDNLVFRL…SRKLVTANLE (65 aa)) enclose the S4 RNA-binding domain.

This sequence belongs to the universal ribosomal protein uS4 family. Part of the 30S ribosomal subunit. Contacts protein S5. The interaction surface between S4 and S5 is involved in control of translational fidelity.

In terms of biological role, one of the primary rRNA binding proteins, it binds directly to 16S rRNA where it nucleates assembly of the body of the 30S subunit. With S5 and S12 plays an important role in translational accuracy. This is Small ribosomal subunit protein uS4 from Synechococcus elongatus (strain ATCC 33912 / PCC 7942 / FACHB-805) (Anacystis nidulans R2).